The primary structure comprises 222 residues: Leucyl/phenylalanyl-tRNA--protein transferase (222 aa).

It belongs to the L/F-transferase family.

It is found in the cytoplasm. The enzyme catalyses N-terminal L-lysyl-[protein] + L-leucyl-tRNA(Leu) = N-terminal L-leucyl-L-lysyl-[protein] + tRNA(Leu) + H(+). It carries out the reaction N-terminal L-arginyl-[protein] + L-leucyl-tRNA(Leu) = N-terminal L-leucyl-L-arginyl-[protein] + tRNA(Leu) + H(+). It catalyses the reaction L-phenylalanyl-tRNA(Phe) + an N-terminal L-alpha-aminoacyl-[protein] = an N-terminal L-phenylalanyl-L-alpha-aminoacyl-[protein] + tRNA(Phe). In terms of biological role, functions in the N-end rule pathway of protein degradation where it conjugates Leu, Phe and, less efficiently, Met from aminoacyl-tRNAs to the N-termini of proteins containing an N-terminal arginine or lysine. In Legionella pneumophila (strain Corby), this protein is Leucyl/phenylalanyl-tRNA--protein transferase.